Reading from the N-terminus, the 479-residue chain is Adenosylhomocysteinase (479 aa).

Residues T56, D133, and E199 each contribute to the substrate site. 200–202 (TTT) serves as a coordination point for NAD(+). Residues K229 and D233 each contribute to the substrate site. NAD(+)-binding positions include N234, 263–268 (GYGDVG), E286, N321, 342–344 (IGH), and N390.

It belongs to the adenosylhomocysteinase family. In terms of assembly, homotetramer. It depends on NAD(+) as a cofactor.

The catalysed reaction is S-adenosyl-L-homocysteine + H2O = L-homocysteine + adenosine. It functions in the pathway amino-acid biosynthesis; L-homocysteine biosynthesis; L-homocysteine from S-adenosyl-L-homocysteine: step 1/1. Adenosylhomocysteine is a competitive inhibitor of S-adenosyl-L-methionine-dependent methyl transferase reactions; therefore adenosylhomocysteinase may play a key role in the control of methylations via regulation of the intracellular concentration of adenosylhomocysteine. The chain is Adenosylhomocysteinase from Plasmodium yoelii yoelii.